A 352-amino-acid chain; its full sequence is Protein RecA (352 aa).

Residue 65-72 participates in ATP binding; sequence GPESSGKT. The tract at residues 333–352 is disordered; that stretch reads VKAAANREPVEEVEEADTDI. Residues 343–352 show a composition bias toward acidic residues; the sequence is EEVEEADTDI.

The protein belongs to the RecA family.

The protein localises to the cytoplasm. Functionally, can catalyze the hydrolysis of ATP in the presence of single-stranded DNA, the ATP-dependent uptake of single-stranded DNA by duplex DNA, and the ATP-dependent hybridization of homologous single-stranded DNAs. It interacts with LexA causing its activation and leading to its autocatalytic cleavage. The protein is Protein RecA of Pseudomonas fluorescens.